Reading from the N-terminus, the 138-residue chain is Acidic phospholipase A2 Cvv-E6f (138 aa).

Positions methionine 1–glycine 16 are cleaved as a signal peptide. 7 disulfides stabilise this stretch: cysteine 42–cysteine 131, cysteine 44–cysteine 60, cysteine 59–cysteine 111, cysteine 65–cysteine 138, cysteine 66–cysteine 104, cysteine 73–cysteine 97, and cysteine 91–cysteine 102. Residues tyrosine 43, glycine 45, and glycine 47 each coordinate Ca(2+). Residue histidine 63 is part of the active site. Aspartate 64 contributes to the Ca(2+) binding site. Aspartate 105 is an active-site residue.

Requires Ca(2+) as cofactor. In terms of tissue distribution, expressed by the venom gland.

Its subcellular location is the secreted. It carries out the reaction a 1,2-diacyl-sn-glycero-3-phosphocholine + H2O = a 1-acyl-sn-glycero-3-phosphocholine + a fatty acid + H(+). Functionally, snake venom phospholipase A2 (PLA2) that shows very low inhibition of ADP-induced platelet aggregation in platelet-rich plasma of human, rabbit and guinea pig. In vivo, shows efficient edema-inducing activities in rat paws. PLA2 catalyzes the calcium-dependent hydrolysis of the 2-acyl groups in 3-sn-phosphoglycerides. This is Acidic phospholipase A2 Cvv-E6f from Crotalus viridis viridis (Prairie rattlesnake).